We begin with the raw amino-acid sequence, 423 residues long: T-box transcription factor T-A (423 aa).

The segment at residues 44-212 is a DNA-binding region (T-box); the sequence is LWTKFKELTN…HNPFAKAFLD (169 aa). Residues 215-227 show a composition bias toward basic and acidic residues; that stretch reads ERSDHKEVPDHST. Disordered regions lie at residues 215-234 and 280-304; these read ERSD…QSGY and AAPY…SSGS. Polar residues predominate over residues 290 to 304; it reads RSTTTNNYMDNSSGS.

Monomer. Binds DNA as a monomer. As to expression, first expressed at the dorsal side of the blastula embryo. Expressed in the germ ring, shield and chordamesoderm during gastrulation and is restricted to the notochord and tailbud during somitogenesis (at protein level).

It localises to the nucleus. In terms of biological role, involved in the transcriptional regulation of genes required for mesoderm differentiation, including itself. Indispensable for the formation of the notochord and the tail structure. Functions together with tbx16/spadetail in development of trunk and tail mesoderm. Functions by itself early in development to repress medial floor plate and promote notochord fate but at later times, functions together with tbx16/spadetail to promote medial floor plate formation. Acts in a parallel pathway to, but cooperates with, non-canonical wnt-signaling during tail formation. Required for the morphogenesis of Kupffer's vesicle and regulates left-right asymmetry. The protein is T-box transcription factor T-A (tbxta) of Danio rerio (Zebrafish).